The chain runs to 76 residues: Bowman-Birk type proteinase inhibitor DE-4 (76 aa).

Cystine bridges form between Cys15–Cys69, Cys16–Cys31, Cys19–Cys65, Cys21–Cys29, Cys39–Cys46, Cys43–Cys58, and Cys48–Cys56.

The protein belongs to the Bowman-Birk serine protease inhibitor family.

This Macrotyloma axillare (Perennial horse gram) protein is Bowman-Birk type proteinase inhibitor DE-4.